The following is a 97-amino-acid chain: Aspartyl/glutamyl-tRNA(Asn/Gln) amidotransferase subunit C (97 aa).

Belongs to the GatC family. In terms of assembly, heterotrimer of A, B and C subunits.

It carries out the reaction L-glutamyl-tRNA(Gln) + L-glutamine + ATP + H2O = L-glutaminyl-tRNA(Gln) + L-glutamate + ADP + phosphate + H(+). It catalyses the reaction L-aspartyl-tRNA(Asn) + L-glutamine + ATP + H2O = L-asparaginyl-tRNA(Asn) + L-glutamate + ADP + phosphate + 2 H(+). In terms of biological role, allows the formation of correctly charged Asn-tRNA(Asn) or Gln-tRNA(Gln) through the transamidation of misacylated Asp-tRNA(Asn) or Glu-tRNA(Gln) in organisms which lack either or both of asparaginyl-tRNA or glutaminyl-tRNA synthetases. The reaction takes place in the presence of glutamine and ATP through an activated phospho-Asp-tRNA(Asn) or phospho-Glu-tRNA(Gln). The sequence is that of Aspartyl/glutamyl-tRNA(Asn/Gln) amidotransferase subunit C from Picosynechococcus sp. (strain ATCC 27264 / PCC 7002 / PR-6) (Agmenellum quadruplicatum).